Consider the following 396-residue polypeptide: S-adenosylmethionine synthase (396 aa).

Residue Glu12 coordinates Mg(2+). An ATP-binding site is contributed by His18. Residue Glu46 coordinates K(+). Residues Glu59 and Gln102 each contribute to the L-methionine site. ATP-binding positions include 170–172 (DGK), 238–241 (SGRF), Asp249, 255–256 (RK), Ala272, Lys276, and Lys280. Asp249 provides a ligand contact to L-methionine. Lys280 is a binding site for L-methionine.

It belongs to the AdoMet synthase family. Homotetramer. It depends on Mn(2+) as a cofactor. The cofactor is Mg(2+). Requires Co(2+) as cofactor. K(+) serves as cofactor.

Its subcellular location is the cytoplasm. The enzyme catalyses L-methionine + ATP + H2O = S-adenosyl-L-methionine + phosphate + diphosphate. It participates in amino-acid biosynthesis; S-adenosyl-L-methionine biosynthesis; S-adenosyl-L-methionine from L-methionine: step 1/1. Its function is as follows. Catalyzes the formation of S-adenosylmethionine from methionine and ATP. The reaction comprises two steps that are both catalyzed by the same enzyme: formation of S-adenosylmethionine (AdoMet) and triphosphate, and subsequent hydrolysis of the triphosphate. This Triticum aestivum (Wheat) protein is S-adenosylmethionine synthase (SAMS).